The sequence spans 1553 residues: Sterol 3-beta-glucosyltransferase (1553 aa).

Composition is skewed to polar residues over residues 1–10 (MASSQPTSSG) and 25–36 (LNTETSSSQHRA). 2 disordered regions span residues 1–106 (MASS…NEED) and 189–270 (PASA…GLAP). Over residues 90–100 (LPDRLKDNGKE) the composition is skewed to basic and acidic residues. Over residues 211–222 (LLQSVPSLSRLS) the composition is skewed to low complexity. Residues 223 to 232 (SSHKSKKTKQ) are compositionally biased toward basic residues. GRAM domains lie at 323–370 (KKLK…HLPK) and 464–495 (SLQRVIFRSHNDGDSVKISIPIRNILDIEEAQ). A PH domain is found at 374 to 470 (EIAKSGYLSK…WVKSLQRVIF (97 aa)). 3 disordered regions span residues 542–569 (SPEDSGANDAPKGTGGDRAIGDNLGSPR), 611–662 (FSRR…FDDP), and 805–825 (GKKHYDHPAGRRTEREDVEDD). Basic and acidic residues predominate over residues 633-650 (LHGDGRRSFSKPRHEPHA). Residues 651–662 (STDSYAQSFDDP) show a composition bias toward polar residues. Basic and acidic residues predominate over residues 810-819 (DHPAGRRTER). The region spanning 834–900 (ARFQAHFALP…KDIETVDKEK (67 aa)) is the GRAM 3 domain. UDP-alpha-D-glucose-binding residues include S1020, R1021, D1023, A1328, H1330, H1343, S1346, G1347, T1348, D1367, and Q1368. Disordered regions lie at residues 1446-1504 (KHQS…GSMS) and 1527-1553 (PALGSRVLSSPPTSPGAMRGAGGVKYV). The span at 1466–1488 (PEDDQGQAAEEDDIDADDEEEES) shows a compositional bias: acidic residues.

Belongs to the glycosyltransferase 28 family.

The protein resides in the cytoplasm. It is found in the preautophagosomal structure membrane. The catalysed reaction is a sterol + UDP-alpha-D-glucose = a sterol 3-beta-D-glucoside + UDP + H(+). It carries out the reaction ergosterol + UDP-alpha-D-glucose = ergosteryl 3-beta-D-glucoside + UDP + H(+). Its function is as follows. Sterol glycosyltransferase responsible for the glycosylation of ergosterol to form ergosterol-glucoside. The polypeptide is Sterol 3-beta-glucosyltransferase (apg-12) (Neurospora crassa (strain ATCC 24698 / 74-OR23-1A / CBS 708.71 / DSM 1257 / FGSC 987)).